The sequence spans 1033 residues: Isoleucine--tRNA ligase 2 (1033 aa).

Positions 47 to 57 (PTANGLPHVGH) match the 'HIGH' region motif. The 'KMSKS' region motif lies at 590–594 (KMSKS). Position 593 (Lys-593) interacts with ATP.

The protein belongs to the class-I aminoacyl-tRNA synthetase family. IleS type 2 subfamily. Monomer. Requires Zn(2+) as cofactor.

The protein localises to the cytoplasm. It catalyses the reaction tRNA(Ile) + L-isoleucine + ATP = L-isoleucyl-tRNA(Ile) + AMP + diphosphate. Functionally, catalyzes the attachment of isoleucine to tRNA(Ile). As IleRS can inadvertently accommodate and process structurally similar amino acids such as valine, to avoid such errors it has two additional distinct tRNA(Ile)-dependent editing activities. One activity is designated as 'pretransfer' editing and involves the hydrolysis of activated Val-AMP. The other activity is designated 'posttransfer' editing and involves deacylation of mischarged Val-tRNA(Ile). The sequence is that of Isoleucine--tRNA ligase 2 from Bacillus cereus (strain ZK / E33L).